The chain runs to 139 residues: Large ribosomal subunit protein uL16 (139 aa).

Residues Met-1–Val-16 show a composition bias toward basic residues. Residues Met-1–Lys-22 are disordered.

The protein belongs to the universal ribosomal protein uL16 family. Part of the 50S ribosomal subunit.

Binds 23S rRNA and is also seen to make contacts with the A and possibly P site tRNAs. This chain is Large ribosomal subunit protein uL16, found in Bifidobacterium longum subsp. infantis (strain ATCC 15697 / DSM 20088 / JCM 1222 / NCTC 11817 / S12).